We begin with the raw amino-acid sequence, 218 residues long: 1-Cys peroxiredoxin PER1 (218 aa).

In terms of domain architecture, Thioredoxin spans 4-164; it reads LTIGDTVPNL…VVRAVDSLLT (161 aa). Residue Cys46 is the Cysteine sulfenic acid (-SOH) intermediate of the active site. The short motif at 194 to 217 is the Bipartite nuclear localization signal element; that stretch reads KKMFPQGFETADLPSKKGYLRFTK.

It belongs to the peroxiredoxin family. Prx6 subfamily. As to expression, embryo and aleurone cells.

The protein resides in the nucleus. It localises to the cytoplasm. It catalyses the reaction a hydroperoxide + [thioredoxin]-dithiol = an alcohol + [thioredoxin]-disulfide + H2O. Its function is as follows. Thiol-specific peroxidase that catalyzes the reduction of hydrogen peroxide and organic hydroperoxides to water and alcohols, respectively. Seems to contribute to the inhibition of germination during stress. The sequence is that of 1-Cys peroxiredoxin PER1 (PER1) from Hordeum vulgare (Barley).